Here is a 410-residue protein sequence, read N- to C-terminus: Platelet-activating factor acetylhydrolase IB subunit alpha (410 aa).

The segment at 1–38 is required for self-association and interaction with PAFAH1B2 and PAFAH1B3; that stretch reads MVLSQRQRDELNRAIADYLRSNGYEEAYSVFKKEAELD. Residues 1–66 are interaction with NDE1; it reads MVLSQRQRDE…SVIRLQKKVM (66 aa). An interaction with NDEL1 region spans residues 1 to 102; sequence MVLSQRQRDE…EWIPRPPEKY (102 aa). The LisH domain maps to 7 to 39; it reads QRDELNRAIADYLRSNGYEEAYSVFKKEAELDM. The residue at position 53 (K53) is an N6-acetyllysine. Residues 56-82 adopt a coiled-coil conformation; that stretch reads TSVIRLQKKVMELESKLNEAKEEFTSG. Positions 83–410 are interaction with dynein and dynactin; the sequence is GPLGQKRDPK…DQTVKVWECR (328 aa). WD repeat units follow at residues 106–147, 148–187, 190–229, 232–271, 274–333, 336–377, and 379–410; these read GHRS…RTLK, GHTD…CIRT, GHDH…CVKT, GHRE…CKAE, EHEH…CLMT, GHDN…KTLN, and HEHF…WECR. S109 is subject to Phosphoserine. The tract at residues 367–409 is interaction with DCX; sequence YKNKRCMKTLNAHEHFVTSLDFHKTAPYVVTGFVDQTVKVWEC. An interaction with NDEL1 region spans residues 388–410; it reads FHKTAPYVVTGFVDQTVKVWECR.

The protein belongs to the WD repeat LIS1/nudF family. As to quaternary structure, can self-associate. Component of the cytosolic PAF-AH (I) heterotetrameric enzyme, which is composed of PAFAH1B1 (beta), PAFAH1B2 (alpha2) and PAFAH1B3 (alpha1) subunits. The catalytic activity of the enzyme resides in the alpha1 (PAFAH1B3) and alpha2 (PAFAH1B2) subunits, whereas the beta subunit (PAFAH1B1) has regulatory activity. Trimer formation is not essential for the catalytic activity. Interacts with the catalytic dimer of PAF-AH (I) heterotetrameric enzyme: interacts with PAFAH1B2 homodimer (alpha2/alpha2 homodimer), PAFAH1B3 homodimer (alpha1/alpha1 homodimer) and PAFAH1B2-PAFAH1B3 heterodimer (alpha2/alpha1 heterodimer). Interacts with DCX, dynein, dynactin, IQGAP1, KATNB1, NDE1, NDEL1, NUDC and RSN. Interacts with DISC1, and this interaction is enhanced by NDEL1. Interacts with DAB1 when DAB1 is phosphorylated in response to RELN/reelin signaling. Interacts with INTS13. Interacts with DCDC1.

Its subcellular location is the cytoplasm. It localises to the cytoskeleton. It is found in the microtubule organizing center. The protein localises to the centrosome. The protein resides in the spindle. Its subcellular location is the nucleus membrane. Regulatory subunit (beta subunit) of the cytosolic type I platelet-activating factor (PAF) acetylhydrolase (PAF-AH (I)), an enzyme that catalyzes the hydrolyze of the acetyl group at the sn-2 position of PAF and its analogs and participates in PAF inactivation. Regulates the PAF-AH (I) activity in a catalytic dimer composition-dependent manner. Positively regulates the activity of the minus-end directed microtubule motor protein dynein. May enhance dynein-mediated microtubule sliding by targeting dynein to the microtubule plus end. Required for several dynein- and microtubule-dependent processes such as the maintenance of Golgi integrity, the peripheral transport of microtubule fragments and the coupling of the nucleus and centrosome. Required during brain development for the proliferation of neuronal precursors and the migration of newly formed neurons from the ventricular/subventricular zone toward the cortical plate. Neuronal migration involves a process called nucleokinesis, whereby migrating cells extend an anterior process into which the nucleus subsequently translocates. During nucleokinesis dynein at the nuclear surface may translocate the nucleus towards the centrosome by exerting force on centrosomal microtubules. Also required for proper activation of Rho GTPases and actin polymerization at the leading edge of locomoting cerebellar neurons and postmigratory hippocampal neurons in response to calcium influx triggered via NMDA receptors. May also play a role in other forms of cell locomotion including the migration of fibroblasts during wound healing. Required for dynein recruitment to microtubule plus ends and BICD2-bound cargos. May modulate the Reelin pathway through interaction of the PAF-AH (I) catalytic dimer with VLDLR. The chain is Platelet-activating factor acetylhydrolase IB subunit alpha from Pan troglodytes (Chimpanzee).